A 296-amino-acid polypeptide reads, in one-letter code: ATP synthase gamma chain (296 aa).

It belongs to the ATPase gamma chain family. In terms of assembly, F-type ATPases have 2 components, CF(1) - the catalytic core - and CF(0) - the membrane proton channel. CF(1) has five subunits: alpha(3), beta(3), gamma(1), delta(1), epsilon(1). CF(0) has three main subunits: a, b and c.

It is found in the cell inner membrane. Functionally, produces ATP from ADP in the presence of a proton gradient across the membrane. The gamma chain is believed to be important in regulating ATPase activity and the flow of protons through the CF(0) complex. In Rhodopirellula baltica (strain DSM 10527 / NCIMB 13988 / SH1), this protein is ATP synthase gamma chain.